A 482-amino-acid polypeptide reads, in one-letter code: Cysteine--tRNA ligase (482 aa).

Cysteine 29 contributes to the Zn(2+) binding site. The 'HIGH' region signature appears at 31–41 (VTVYDYCHLGH). Zn(2+) contacts are provided by cysteine 213, histidine 238, and glutamate 242. The 'KMSKS' region signature appears at 275–279 (KMSKS). Lysine 278 lines the ATP pocket.

It belongs to the class-I aminoacyl-tRNA synthetase family. In terms of assembly, monomer. The cofactor is Zn(2+).

The protein localises to the cytoplasm. The catalysed reaction is tRNA(Cys) + L-cysteine + ATP = L-cysteinyl-tRNA(Cys) + AMP + diphosphate. This Gloeobacter violaceus (strain ATCC 29082 / PCC 7421) protein is Cysteine--tRNA ligase.